Reading from the N-terminus, the 222-residue chain is DnaJ homolog subfamily B member 9 (222 aa).

The signal sequence occupies residues 1 to 23 (MATPQSVFVFAICILMITELILA). A J domain is found at 26–90 (NYYDILGVPK…NRRKEYDIIG (65 aa)). Residues 91-222 (HSAFTNGKGQ…VTTYTDCSGQ (132 aa)) are divergent targeting domain. Position 133 is a phosphoserine (Ser133).

As to quaternary structure, interacts with HSPA5/BiP; interaction is direct. Interacts with ERN1/IRE1 (via the luminal region). Interacts with DERL1.

The protein resides in the endoplasmic reticulum lumen. Its function is as follows. Co-chaperone for Hsp70 protein HSPA5/BiP that acts as a key repressor of the ERN1/IRE1-mediated unfolded protein response (UPR). J domain-containing co-chaperones stimulate the ATPase activity of Hsp70 proteins and are required for efficient substrate recognition by Hsp70 proteins. In the unstressed endoplasmic reticulum, interacts with the luminal region of ERN1/IRE1 and selectively recruits HSPA5/BiP: HSPA5/BiP disrupts the dimerization of the active ERN1/IRE1 luminal region, thereby inactivating ERN1/IRE1. Also involved in endoplasmic reticulum-associated degradation (ERAD) of misfolded proteins. Required for survival of B-cell progenitors and normal antibody production. The chain is DnaJ homolog subfamily B member 9 from Rattus norvegicus (Rat).